The primary structure comprises 604 residues: Ectonucleoside triphosphate diphosphohydrolase 7 (604 aa).

Residues 1 to 28 (MARISFSYLCPASWYFTVPTVSPFLRQR) lie on the Cytoplasmic side of the membrane. A helical membrane pass occupies residues 29-49 (VAFLGLFFISCLLLLMLIIDF). Over 50-546 (RHWSASLPRD…QAHGSWFRLS (497 aa)) the chain is Vesicular. The active-site Proton acceptor is Glu-217. Residue Asn-330 is glycosylated (N-linked (GlcNAc...) asparagine). A disulfide bridge links Cys-448 with Cys-477. The helical transmembrane segment at 547–567 (FVYNHYLFFACILVVLLAIFL) threads the bilayer. Residues 568–604 (YLLRLRRIHHRQTRASAPLDLLWLEEVVPMMGVQVGP) lie on the Cytoplasmic side of the membrane.

The protein belongs to the GDA1/CD39 NTPase family. Ca(2+) is required as a cofactor. Mg(2+) serves as cofactor.

Its subcellular location is the cytoplasmic vesicle membrane. It catalyses the reaction a ribonucleoside 5'-triphosphate + H2O = a ribonucleoside 5'-diphosphate + phosphate + H(+). It carries out the reaction UTP + H2O = UDP + phosphate + H(+). The enzyme catalyses GTP + H2O = GDP + phosphate + H(+). The catalysed reaction is CTP + H2O = CDP + phosphate + H(+). Functionally, catalyzes the hydrolysis of nucleoside triphosphates and diphosphates in a calcium- or magnesium-dependent manner. Preferentially hydrolyzes nucleoside 5'-triphosphates, with substrate preference for UTP &gt; GTP &gt; CTP. Hydrolyzes ATP and nucleoside diphosphates only to a minor extent. In Homo sapiens (Human), this protein is Ectonucleoside triphosphate diphosphohydrolase 7 (ENTPD7).